The sequence spans 266 residues: Phosphoethanolamine N-methyltransferase (266 aa).

Residue Gln18 participates in phosphoethanolamine binding. Tyr19 is an active-site residue. A phosphoethanolamine-binding site is contributed by Tyr27. Residues Ile36, Ser37, Gly63, Asp85, Ile86, Asp110, Ile111, and Arg127 each contribute to the S-adenosyl-L-methionine site. His132 is a catalytic residue. Phosphoethanolamine contacts are provided by Tyr160, Tyr175, Arg179, Tyr181, and Lys247.

This sequence belongs to the class I-like SAM-binding methyltransferase superfamily. PEAMT family. As to quaternary structure, monomer.

It localises to the golgi apparatus membrane. The protein resides in the cytoplasm. It carries out the reaction phosphoethanolamine + S-adenosyl-L-methionine = N-methylethanolamine phosphate + S-adenosyl-L-homocysteine + H(+). The enzyme catalyses N-methylethanolamine phosphate + S-adenosyl-L-methionine = N,N-dimethylethanolamine phosphate + S-adenosyl-L-homocysteine + H(+). It catalyses the reaction N,N-dimethylethanolamine phosphate + S-adenosyl-L-methionine = phosphocholine + S-adenosyl-L-homocysteine + H(+). It participates in phospholipid metabolism; phosphatidylcholine biosynthesis; phosphocholine from phosphoethanolamine. Its activity is regulated as follows. Inhibited by phosphocholine. Inhibited by hexadecylphosphocholine (miltefosine). Inhibited by S-adenosyl-l-homocysteine. Weakly inhibited in vitro by amodiaquine, chloroquine and primaquine. Inhibited by NSC-158011. Catalyzes N-methylation of phosphoethanolamine, phosphomonomethylethanolamine and phosphodimethylethanolamine, the three methylation steps required to convert phosphoethanolamine to phosphocholine. Has no ethanolamine- or phosphatidylethanolamine-N-methyltransferase activity. Required for gametocyte development, maturation and transmission to mosquitoes and for oocyst formation in the mosquito midgut. In Plasmodium falciparum (isolate 3D7), this protein is Phosphoethanolamine N-methyltransferase.